The primary structure comprises 789 residues: Alpha-glucosidase 2 (789 aa).

Disordered regions lie at residues 1–24 (MTGLSPSGDIKPLLDDESQRPRVI) and 512–531 (ELNPQSLSSGLDDYPRASHP). The active-site Proton donor is the Asp-523. Catalysis depends on Glu-756, which acts as the Proton acceptor.

This sequence belongs to the glycosyl hydrolase 63 family.

It participates in glycan metabolism; N-glycan degradation. The protein is Alpha-glucosidase 2 (GCS2) of Arabidopsis thaliana (Mouse-ear cress).